The following is a 134-amino-acid chain: Cystatin-1 (134 aa).

Residues 1–17 (MKAIYLILTVLCGFSAS) form the signal peptide. One can recognise a Cystatin domain in the interval 21–116 (GGWRDKDVDD…CTAIIWTRSW (96 aa)). The Secondary area of contact signature appears at 65–69 (QVVSG). 2 disulfides stabilise this stretch: Cys-83–Cys-96 and Cys-107–Cys-127.

This sequence belongs to the cystatin family. Expressed by the venom gland.

The protein resides in the secreted. Inhibits various C1 cysteine proteases. This protein has no toxic activity and its function in the venom is unknown. It may play a role as a housekeeping or regulatory protein. This Chilobrachys guangxiensis (Chinese earth tiger tarantula) protein is Cystatin-1.